The following is a 135-amino-acid chain: Ribosome-binding factor A (135 aa).

This sequence belongs to the RbfA family. Monomer. Binds 30S ribosomal subunits, but not 50S ribosomal subunits or 70S ribosomes.

It is found in the cytoplasm. Functionally, one of several proteins that assist in the late maturation steps of the functional core of the 30S ribosomal subunit. Associates with free 30S ribosomal subunits (but not with 30S subunits that are part of 70S ribosomes or polysomes). Required for efficient processing of 16S rRNA. May interact with the 5'-terminal helix region of 16S rRNA. This Sinorhizobium fredii (strain NBRC 101917 / NGR234) protein is Ribosome-binding factor A.